The following is a 621-amino-acid chain: GPI-anchor transamidase component GPAA1 (621 aa).

The Cytoplasmic portion of the chain corresponds to 1–19 (MGLLSDPVRRRALARIVLR). The chain crosses the membrane as a helical span at residues 20-41 (LNTPLCVLSYVAGIAWFLALAF). The Lumenal portion of the chain corresponds to 42–370 (PPLTQRTYMS…LLPALSRFVS (329 aa)). A 2-acyl-6-[6-phosphoethanolamine-alpha-D-mannosyl-(1-&gt;2)-6-phosphoethanolamine-alpha-D-mannosyl-(1-&gt;6)-2-phosphoethanolamine-alpha-D-mannosyl-(1-&gt;4)-alpha-D-glucosaminyl]-1-(1-radyl,2-acyl-sn-glycero-3-phospho)-1D-myo-inositol is bound by residues Tyr49 and Ser51. N-linked (GlcNAc...) asparagine glycosylation is present at Asn203. Residues Cys259 and Cys266 are joined by a disulfide bond. Positions 354, 355, and 356 each coordinate a 2-acyl-6-[6-phosphoethanolamine-alpha-D-mannosyl-(1-&gt;2)-6-phosphoethanolamine-alpha-D-mannosyl-(1-&gt;6)-2-phosphoethanolamine-alpha-D-mannosyl-(1-&gt;4)-alpha-D-glucosaminyl]-1-(1-radyl,2-acyl-sn-glycero-3-phospho)-1D-myo-inositol. A Mg(2+)-binding site is contributed by Gln355. Residues 371-393 (IGLYMPATGFLLLVLGLKALELW) form a helical membrane-spanning segment. The Cytoplasmic segment spans residues 394–425 (MQLHQAGVNPEEAGKAPSPGTPLLPTQGVGLA). Residues 426 to 450 (SLTAPLLISQAMGLALYFLPVLGQH) form a helical membrane-spanning segment. At 451–462 (LATQHFPVAEAE) the chain is on the lumenal side. A helical membrane pass occupies residues 463–483 (AVVLTLLAIYVAGLALPHNTH). Topologically, residues 484 to 495 (RVVNSQVPDRGW) are cytoplasmic. The next 2 helical transmembrane spans lie at 496–519 (MALKLVALIYLALQLGCIALLNFS) and 520–536 (LGFLLAATMVPAAALAK). Residues 537–540 (PHGP) lie on the Cytoplasmic side of the membrane. The helical transmembrane segment at 541 to 563 (RTLYAALLVVTSPAVTLFGSLFL) threads the bilayer. Topologically, residues 564 to 597 (WRELLEVPLSLAEGWQLFLTALAQGVLEHYTYGA) are lumenal. The chain crosses the membrane as a helical span at residues 598–619 (LLFPILALGLYPCWLLFWNVLF). Residues 620–621 (WK) lie on the Cytoplasmic side of the membrane.

Heteropentamer. Part of the GPI-anchor transamidase complex, consisting of PIGK, PIGT, PIGS, PIGU and GAA1. Interacts with PIGK. In terms of tissue distribution, ubiquitously expressed in fetal and adult tissues. Expressed at higher levels in fetal tissues than adult tissues. In embryos abundant in the choroid plexus, skeletal muscle,.

The protein localises to the endoplasmic reticulum membrane. The protein operates within glycolipid biosynthesis; glycosylphosphatidylinositol-anchor biosynthesis. Its function is as follows. Component of the glycosylphosphatidylinositol-anchor (GPI-anchor) transamidase (GPI-T) complex that catalyzes the formation of the linkage between a proprotein and a GPI-anchor and participates in GPI anchored protein biosynthesis. Binds GPI-anchor. The protein is GPI-anchor transamidase component GPAA1 of Mus musculus (Mouse).